The primary structure comprises 49 residues: Soritesidine (49 aa).

The protein resides in the secreted. Its function is as follows. Very potent toxin that exhibits a wide range of toxicities over various organisms and cells including brine shrimp larvae (Artemia salina), sea hare eggs (Aplysia kurodai), mice, and cultured mammalian cells. An SOR-containing fraction cleaves plasmid DNA in a bivalent metal ion dependent manner suggesting genotoxicity of SOR. The polypeptide is Soritesidine (Spongosorites sp. (strain QM G324170) (Okinawan marine Sponge)).